A 351-amino-acid polypeptide reads, in one-letter code: Phosphoribosylformylglycinamidine cyclo-ligase (351 aa).

It belongs to the AIR synthase family.

Its subcellular location is the cytoplasm. It catalyses the reaction 2-formamido-N(1)-(5-O-phospho-beta-D-ribosyl)acetamidine + ATP = 5-amino-1-(5-phospho-beta-D-ribosyl)imidazole + ADP + phosphate + H(+). The protein operates within purine metabolism; IMP biosynthesis via de novo pathway; 5-amino-1-(5-phospho-D-ribosyl)imidazole from N(2)-formyl-N(1)-(5-phospho-D-ribosyl)glycinamide: step 2/2. The sequence is that of Phosphoribosylformylglycinamidine cyclo-ligase from Oleidesulfovibrio alaskensis (strain ATCC BAA-1058 / DSM 17464 / G20) (Desulfovibrio alaskensis).